Consider the following 346-residue polypeptide: 3-dehydroquinate synthase (346 aa).

NAD(+)-binding positions include 62–67, 96–100, 120–121, Lys133, Lys142, and 160–163; these read DGEEYK, GVISD, TT, and FLRT. Residues Glu175, His234, and His251 each contribute to the Zn(2+) site.

This sequence belongs to the sugar phosphate cyclases superfamily. Dehydroquinate synthase family. Co(2+) serves as cofactor. The cofactor is Zn(2+). It depends on NAD(+) as a cofactor.

The protein resides in the cytoplasm. It catalyses the reaction 7-phospho-2-dehydro-3-deoxy-D-arabino-heptonate = 3-dehydroquinate + phosphate. It participates in metabolic intermediate biosynthesis; chorismate biosynthesis; chorismate from D-erythrose 4-phosphate and phosphoenolpyruvate: step 2/7. Its function is as follows. Catalyzes the conversion of 3-deoxy-D-arabino-heptulosonate 7-phosphate (DAHP) to dehydroquinate (DHQ). The protein is 3-dehydroquinate synthase of Campylobacter curvus (strain 525.92).